We begin with the raw amino-acid sequence, 52 residues long: Large ribosomal subunit protein eL39 (52 aa).

It belongs to the eukaryotic ribosomal protein eL39 family. As to quaternary structure, interacts with YIH1.

In Encephalitozoon cuniculi (strain GB-M1) (Microsporidian parasite), this protein is Large ribosomal subunit protein eL39 (RPL39).